Reading from the N-terminus, the 316-residue chain is MALQGWRFFGVSATIIIYIGGVLFLSMNNIPGSHPKRPRIERFAEFPSFHSPRFPMPSRKMTIRWCRDLKYMNRDLPNYTDYRADFYTLPSDVSASLQASPMLTALASFPGSGNTWLRYLLQQATGILTGSIYKDYGLLKTGFPAENVCNSSVLLVKTHEWGGKSWAPFAKAILLVRDPEKAIIAEFNRQSGGHIGFASPDRYKRTKGKYWQQFVSNKLKGWELMNLSWARNFTGSIKVVFYDDLVHHTERELRAILEFLQFPVDETLLRCAILRKEGIFRRKKRLLSFDPYTEAMRAQVQARKRIVYSLLGRKEH.

The helical transmembrane segment at 8 to 28 threads the bilayer; the sequence is FFGVSATIIIYIGGVLFLSMN. 4 N-linked (GlcNAc...) asparagine glycosylation sites follow: N78, N150, N226, and N232.

The protein belongs to the WSCD family.

It is found in the membrane. In Drosophila pseudoobscura pseudoobscura (Fruit fly), this protein is WSCD family member GA21586.